Reading from the N-terminus, the 377-residue chain is Early estrogen-induced gene 1 protein (377 aa).

The region spanning 2–145 is the C2 NT-type domain; sequence AFLTKKKKFK…ILKVNIGMSL (144 aa). Composition is skewed to polar residues over residues 160–173, 188–198, and 222–234; these read KTVS…SLQM, VRQNRSRQAML, and SRNS…QSKI. Residues 160-313 are disordered; it reads KTVSPPGQDS…SVESQPTWVD (154 aa). Residues 256-269 show a composition bias toward low complexity; it reads TSTSSSVSGGLSLT. Positions 274 to 285 are enriched in basic and acidic residues; it reads EPERDVKPEKPP.

This sequence belongs to the EEIG family.

It localises to the nucleus. Its subcellular location is the cytoplasm. In terms of biological role, may be involved in osteoclast differentiation. This chain is Early estrogen-induced gene 1 protein (eeig1), found in Xenopus laevis (African clawed frog).